The following is a 296-amino-acid chain: MEVTAQLVKELRDRTGAGMLDCKKALEDTGGNIEEAITWLREKGITKAAKKSDRVAAEGLVGLVTKGDKQIIFEVNSETDFVAKNKQFKDLMATVGETLINNDPKTVEDVLKVSVNGEPLETVIVHAIATIGEKITLRRFKTVHLKTDQSLGVYLHSNNRIATVLIFSGKIDETIGKQLAMHVSAMRPQFISRDDISVDFLNSEKPILTAEAKNDPKNAGKPDNILEKMVEGRLNKQLAEISFLDQVFVVNPDQKISDVIKANNVNVVDMIRYEVGEGIEKEELDFASEVMAQVLK.

Positions 79–82 (TDFV) are involved in Mg(2+) ion dislocation from EF-Tu.

It belongs to the EF-Ts family.

It localises to the cytoplasm. Associates with the EF-Tu.GDP complex and induces the exchange of GDP to GTP. It remains bound to the aminoacyl-tRNA.EF-Tu.GTP complex up to the GTP hydrolysis stage on the ribosome. The polypeptide is Elongation factor Ts (tsf) (Spiroplasma citri).